Consider the following 371-residue polypeptide: tRNA (guanine(26)-N(2))-dimethyltransferase (371 aa).

Residues 4–368 (IEVTEGRTTF…APLDAIAAAL (365 aa)) enclose the Trm1 methyltransferase domain. 5 residues coordinate S-adenosyl-L-methionine: Arg-41, Arg-66, Asp-82, Asp-108, and Ala-109. Zn(2+) is bound by residues Cys-237, Cys-240, Cys-256, and Cys-259.

It belongs to the class I-like SAM-binding methyltransferase superfamily. Trm1 family.

It carries out the reaction guanosine(26) in tRNA + 2 S-adenosyl-L-methionine = N(2)-dimethylguanosine(26) in tRNA + 2 S-adenosyl-L-homocysteine + 2 H(+). Dimethylates a single guanine residue at position 26 of a number of tRNAs using S-adenosyl-L-methionine as donor of the methyl groups. The sequence is that of tRNA (guanine(26)-N(2))-dimethyltransferase from Methanosphaerula palustris (strain ATCC BAA-1556 / DSM 19958 / E1-9c).